We begin with the raw amino-acid sequence, 493 residues long: Ribosomal protein uS12 methylthiotransferase RimO (493 aa).

Residues R5–N121 form the MTTase N-terminal domain. [4Fe-4S] cluster-binding residues include C14, C50, C84, C198, C202, and C205. A Radical SAM core domain is found at L184–R415. The TRAM domain occupies E417–E487.

Belongs to the methylthiotransferase family. RimO subfamily. It depends on [4Fe-4S] cluster as a cofactor.

It is found in the cytoplasm. It carries out the reaction L-aspartate(89)-[ribosomal protein uS12]-hydrogen + (sulfur carrier)-SH + AH2 + 2 S-adenosyl-L-methionine = 3-methylsulfanyl-L-aspartate(89)-[ribosomal protein uS12]-hydrogen + (sulfur carrier)-H + 5'-deoxyadenosine + L-methionine + A + S-adenosyl-L-homocysteine + 2 H(+). Catalyzes the methylthiolation of an aspartic acid residue of ribosomal protein uS12. The sequence is that of Ribosomal protein uS12 methylthiotransferase RimO from Streptomyces griseus subsp. griseus (strain JCM 4626 / CBS 651.72 / NBRC 13350 / KCC S-0626 / ISP 5235).